A 179-amino-acid polypeptide reads, in one-letter code: UPF0227 protein Swoo_1808 (179 aa).

The protein belongs to the UPF0227 family.

The polypeptide is UPF0227 protein Swoo_1808 (Shewanella woodyi (strain ATCC 51908 / MS32)).